Reading from the N-terminus, the 234-residue chain is Phosphoribosylaminoimidazole-succinocarboxamide synthase (234 aa).

This sequence belongs to the SAICAR synthetase family.

The catalysed reaction is 5-amino-1-(5-phospho-D-ribosyl)imidazole-4-carboxylate + L-aspartate + ATP = (2S)-2-[5-amino-1-(5-phospho-beta-D-ribosyl)imidazole-4-carboxamido]succinate + ADP + phosphate + 2 H(+). Its pathway is purine metabolism; IMP biosynthesis via de novo pathway; 5-amino-1-(5-phospho-D-ribosyl)imidazole-4-carboxamide from 5-amino-1-(5-phospho-D-ribosyl)imidazole-4-carboxylate: step 1/2. This is Phosphoribosylaminoimidazole-succinocarboxamide synthase from Pyrobaculum aerophilum (strain ATCC 51768 / DSM 7523 / JCM 9630 / CIP 104966 / NBRC 100827 / IM2).